The primary structure comprises 1143 residues: ATP-dependent helicase/deoxyribonuclease subunit B (1143 aa).

The region spanning 1–274 (MNYMHLGRAG…YGQTVKFQST (274 aa)) is the UvrD-like helicase ATP-binding domain. 7 to 14 (GRAGTGKT) lines the ATP pocket. In terms of domain architecture, UvrD-like helicase C-terminal spans 267–565 (QTVKFQSTGL…RFSLVPPSLD (299 aa)). [4Fe-4S] cluster contacts are provided by C782, C1104, C1107, and C1113.

Belongs to the helicase family. AddB/RexB type 1 subfamily. In terms of assembly, heterodimer of AddA and AddB. It depends on Mg(2+) as a cofactor. [4Fe-4S] cluster serves as cofactor.

Its function is as follows. The heterodimer acts as both an ATP-dependent DNA helicase and an ATP-dependent, dual-direction single-stranded exonuclease. Recognizes the chi site generating a DNA molecule suitable for the initiation of homologous recombination. The AddB subunit has 5' -&gt; 3' nuclease activity but not helicase activity. The polypeptide is ATP-dependent helicase/deoxyribonuclease subunit B (Exiguobacterium sibiricum (strain DSM 17290 / CCUG 55495 / CIP 109462 / JCM 13490 / 255-15)).